The sequence spans 101 residues: Urease subunit beta (101 aa).

This sequence belongs to the urease beta subunit family. As to quaternary structure, heterotrimer of UreA (gamma), UreB (beta) and UreC (alpha) subunits. Three heterotrimers associate to form the active enzyme.

It is found in the cytoplasm. It catalyses the reaction urea + 2 H2O + H(+) = hydrogencarbonate + 2 NH4(+). Its pathway is nitrogen metabolism; urea degradation; CO(2) and NH(3) from urea (urease route): step 1/1. In Cupriavidus necator (strain ATCC 17699 / DSM 428 / KCTC 22496 / NCIMB 10442 / H16 / Stanier 337) (Ralstonia eutropha), this protein is Urease subunit beta.